A 278-amino-acid polypeptide reads, in one-letter code: MESFGARLHRAVAERGPLCVGIDPHPGLLARWGLDDDVHGLERFADTVVEALGDRVAVVKPQSAFFERFGSRGVAVLESTIRQLRLAGSLVLLDVKRGDIGSTVAAYASAYLEPSSPLHVDAVTVSPYLGVGALAPMFDMAAAKGGGVFVLALTSNPEGAAVQRARTAGGRTVAQVVIDEISQLNAGAQPLGSVGLVVGATIGETGHDLAAVNGPLLAPGLGAQGASAADLRVVFGSALPAVLPAYSREVLAAGPDVAALRAAADRVLADCRAALTGS.

Residue lysine 96 is the Proton donor of the active site.

This sequence belongs to the OMP decarboxylase family. Type 2 subfamily.

It carries out the reaction orotidine 5'-phosphate + H(+) = UMP + CO2. It functions in the pathway pyrimidine metabolism; UMP biosynthesis via de novo pathway; UMP from orotate: step 2/2. The sequence is that of Orotidine 5'-phosphate decarboxylase from Salinispora arenicola (strain CNS-205).